A 398-amino-acid polypeptide reads, in one-letter code: tRNA-specific 2-thiouridylase MnmA (398 aa).

Residues 18–25 and Leu44 contribute to the ATP site; that span reads AMSGGVDS. Cys112 functions as the Nucleophile in the catalytic mechanism. A disulfide bridge connects residues Cys112 and Cys213. An ATP-binding site is contributed by Gly136. The tract at residues 163 to 165 is interaction with tRNA; that stretch reads RDQ. The active-site Cysteine persulfide intermediate is the Cys213.

The protein belongs to the MnmA/TRMU family.

The protein resides in the cytoplasm. The enzyme catalyses S-sulfanyl-L-cysteinyl-[protein] + uridine(34) in tRNA + AH2 + ATP = 2-thiouridine(34) in tRNA + L-cysteinyl-[protein] + A + AMP + diphosphate + H(+). Its function is as follows. Catalyzes the 2-thiolation of uridine at the wobble position (U34) of tRNA, leading to the formation of s(2)U34. This chain is tRNA-specific 2-thiouridylase MnmA, found in Agrobacterium fabrum (strain C58 / ATCC 33970) (Agrobacterium tumefaciens (strain C58)).